Here is a 937-residue protein sequence, read N- to C-terminus: MGGSASSQLDEGKCAYIRGKTEASIKNFSPYYSRQYSVAFCNHVRSEVEQQRDLTSQFLKTKPPLEPGTVLYEAELSQFAEDIRKWKDRYVVVKNDFAVESYENKEAYQRGAVPKSRILPAGGKVLTSEEEYSLLSDKHFPDPTASSEKNSQPFLVLPKAFPVYLWQPYLRHGYFCFHEAAEQQKFSALLNDCIRHLNHDYMKQTTFEAQAFLEAVQFFRQEKGHYGAWEVITGDEVQILSKLVMEELLPTLQTDLLPKLKGKKNDRKRAWFGLLEEAYNLVQHQVSEGLSALKEECRALTKDLEGTIRSDMDQIVNSKNFLTGKIRAMVAQPAENRCGESVQPFLASILEELMGPVSSGFSEVRALFEKEVDELSQSFHTTQDGAQLKECLDQLMKLPLDSVKMEPCYTKVTLLPERLLDLQSRFRFPHVDLVVQRTQNYMQELMENAVFTFEQLLSPYLQGEASRTAVAIEKVKLRVLKQYDYDSSTIRKKIFQEALIQITLPTVQKALASTCKPELQKYEQFIFADHTNMIHVENIYEEILYQILLDETLKVITEAAILKKHNLFEDNMALPSESVSSLTDLKTSMGSNQASPARGASAILPGAPGDEAPGSEVFQGPEEKQQQPGVPGSLAREESASISGSSPPSGEDGQVSVSGVDNSAGNPLSADNSAGPLSSHLSEAEAGEPPKDEETAHKRPESSAVPGSLRELKELLTVTVFVESAPEIGNDTLNGTPVPQEDKKEEEEEEESKIHPEASGPAAIQQDSCEESEVREREAHPMPLEAEAPGVNLGTLPEGRGPTSQSTGEGLTENTSCLGPIEEPSEAQGPTEEVLLATVSTQDSTEAGGEAVHSVTVTPQEDATLSSNPICPVENNEGPQVSEDQEVLGGNDSPALAMDTEQINDAHVYECHWEVEDAPSADILDVHDCDVGSPGEW.

A lipid anchor (N-myristoyl glycine) is attached at G2. Residues S578, S581, S595, S601, and S646 each carry the phosphoserine modification. Polar residues predominate over residues 584–595 (DLKTSMGSNQAS). 2 disordered regions span residues 584–710 (DLKT…GSLR) and 724–891 (SAPE…LGGN). Over residues 640–651 (ASISGSSPPSGE) the composition is skewed to low complexity. The span at 655–681 (VSVSGVDNSAGNPLSADNSAGPLSSHL) shows a compositional bias: polar residues. The segment covering 688–701 (EPPKDEETAHKRPE) has biased composition (basic and acidic residues). 2 positions are modified to phosphoserine: S708 and S768. 2 stretches are compositionally biased toward polar residues: residues 802 to 817 (PTSQ…NTSC) and 855 to 869 (VTVT…SSNP).

This sequence belongs to the Niban family. Detected in brain, lung, spleen and skeletal muscle. Expressed in small renal tumors but not in normal kidney.

Its subcellular location is the cytoplasm. The protein resides in the membrane. Regulates phosphorylation of a number of proteins involved in translation regulation including EIF2A, EIF4EBP1 and RPS6KB1. May be involved in the endoplasmic reticulum stress response. The polypeptide is Protein Niban 1 (Rattus norvegicus (Rat)).